Here is a 100-residue protein sequence, read N- to C-terminus: Small ribosomal subunit protein bS6 (100 aa).

This sequence belongs to the bacterial ribosomal protein bS6 family.

In terms of biological role, binds together with bS18 to 16S ribosomal RNA. In Enterococcus faecalis (strain ATCC 700802 / V583), this protein is Small ribosomal subunit protein bS6.